Here is a 98-residue protein sequence, read N- to C-terminus: Integration host factor subunit alpha (98 aa).

Positions 49–70 (FGNFDLRDKNQRPGRNPKTGED) are disordered.

This sequence belongs to the bacterial histone-like protein family. Heterodimer of an alpha and a beta chain.

This protein is one of the two subunits of integration host factor, a specific DNA-binding protein that functions in genetic recombination as well as in transcriptional and translational control. The chain is Integration host factor subunit alpha from Serratia proteamaculans (strain 568).